The following is an 821-amino-acid chain: Leucine--tRNA ligase (821 aa).

The 'HIGH' region signature appears at 42 to 52 (PYPSGKLHMGH). Residues 583 to 587 (KMSKS) carry the 'KMSKS' region motif. Lys-586 serves as a coordination point for ATP.

Belongs to the class-I aminoacyl-tRNA synthetase family.

The protein resides in the cytoplasm. It carries out the reaction tRNA(Leu) + L-leucine + ATP = L-leucyl-tRNA(Leu) + AMP + diphosphate. The chain is Leucine--tRNA ligase from Carboxydothermus hydrogenoformans (strain ATCC BAA-161 / DSM 6008 / Z-2901).